The chain runs to 211 residues: Superoxide dismutase [Cu-Zn], chloroplastic (211 aa).

Residues 1-57 constitute a chloroplast transit peptide; that stretch reads MQAILAAAMAAQTLLFSATAPPASLFQSPSSARPFHSLRLAAGPAGAAAARALVVAD. Residues histidine 103, histidine 105, and histidine 120 each coordinate Cu cation. Residues cysteine 114 and cysteine 203 are joined by a disulfide bond. Zn(2+) contacts are provided by histidine 120, histidine 128, histidine 137, and aspartate 140. Histidine 177 contributes to the Cu cation binding site.

It belongs to the Cu-Zn superoxide dismutase family. In terms of assembly, homotetramer. The cofactor is Cu cation. Zn(2+) is required as a cofactor.

It is found in the plastid. It localises to the chloroplast. The enzyme catalyses 2 superoxide + 2 H(+) = H2O2 + O2. Its function is as follows. Destroys radicals which are normally produced within the cells and which are toxic to biological systems. The protein is Superoxide dismutase [Cu-Zn], chloroplastic (SODCP) of Oryza sativa subsp. japonica (Rice).